A 159-amino-acid chain; its full sequence is 6,7-dimethyl-8-ribityllumazine synthase (159 aa).

Residues Phe22, 57 to 59, and 81 to 83 each bind 5-amino-6-(D-ribitylamino)uracil; these read AVE and AVI. 86 to 87 contributes to the (2S)-2-hydroxy-3-oxobutyl phosphate binding site; the sequence is GT. Catalysis depends on His89, which acts as the Proton donor. Residue Phe114 participates in 5-amino-6-(D-ribitylamino)uracil binding. Residue Arg128 coordinates (2S)-2-hydroxy-3-oxobutyl phosphate.

The protein belongs to the DMRL synthase family. Forms an icosahedral capsid composed of 60 subunits, arranged as a dodecamer of pentamers.

It carries out the reaction (2S)-2-hydroxy-3-oxobutyl phosphate + 5-amino-6-(D-ribitylamino)uracil = 6,7-dimethyl-8-(1-D-ribityl)lumazine + phosphate + 2 H2O + H(+). The protein operates within cofactor biosynthesis; riboflavin biosynthesis; riboflavin from 2-hydroxy-3-oxobutyl phosphate and 5-amino-6-(D-ribitylamino)uracil: step 1/2. Functionally, catalyzes the formation of 6,7-dimethyl-8-ribityllumazine by condensation of 5-amino-6-(D-ribitylamino)uracil with 3,4-dihydroxy-2-butanone 4-phosphate. This is the penultimate step in the biosynthesis of riboflavin. The sequence is that of 6,7-dimethyl-8-ribityllumazine synthase from Shewanella baltica (strain OS155 / ATCC BAA-1091).